A 111-amino-acid chain; its full sequence is C-X-C motif chemokine 14 (111 aa).

An N-terminal signal peptide occupies residues 1–34; the sequence is MSLLPRRAPPVSMRLLAAALLLLLLALYTARVDG. Cystine bridges form between Cys37/Cys63 and Cys39/Cys84. A D-box motif is present at residues 67-81; sequence MVIITTKSVSRYRGQ.

The protein belongs to the intercrine alpha (chemokine CxC) family. Ubiquitinated, followed by degradation by the proteasome. As to expression, expressed in heart, brain, placenta, lung, liver, skeletal muscle, kidney and pancreas. Highly expressed in normal tissue without inflammatory stimuli and infrequently expressed in cancer cell lines. Weakly expressed in monocyte-derived dendritic cells. Not detected in lung or unstimulated peripheral blood lymphocytes.

The protein resides in the secreted. In terms of biological role, potent chemoattractant for neutrophils, and weaker for dendritic cells. Not chemotactic for T-cells, B-cells, monocytes, natural killer cells or granulocytes. Does not inhibit proliferation of myeloid progenitors in colony formation assays. The polypeptide is C-X-C motif chemokine 14 (CXCL14) (Homo sapiens (Human)).